The following is a 271-amino-acid chain: MSDSPERVYPMLLDFVRKETISKNLLRVTLTGEDLIGFPEDQNGSHIKVFFPNQASGILQLPVREGDNVIWPEHKPVPRAYSVRQYRAAVNELDIDFVTHGEETPGGGWALKADIGSQIGLIGPAGPDPLIEPADWHIIAGDLSAVPAISAILEKLPSDAKGYVFIEVDEIEDIHDLVHPEEMAINWLMRNPHDAEPALAKAIKQLPSPEKATSLSAFIAGENQSVINCRKILRNDYQIARDKLYAIPYWKRGKTEEAYHDERHDVMDAVY.

Residues 8–131 (VYPMLLDFVR…IGPAGPDPLI (124 aa)) form the FAD-binding FR-type domain.

This sequence belongs to the SIP oxidoreductase family. In terms of assembly, monomer. The cofactor is FAD.

Its subcellular location is the cytoplasm. It carries out the reaction 2 a Fe(II)-siderophore + NAD(+) + H(+) = 2 a Fe(III)-siderophore + NADH. Its function is as follows. Ferric-siderophore reductase involved in iron removal from the siderophores after their transport into the cell. Acts as a major ferric-vulnibactin reductase catalyzing the reduction of Fe(3+)-vulnibactin, a catecholate siderophore synthesized by V.vulnificus. The chain is Ferric vulnibactin reductase VuuB from Vibrio vulnificus (strain CMCP6).